Reading from the N-terminus, the 371-residue chain is Proton-coupled zinc antiporter SLC30A2 (371 aa).

The Cytoplasmic portion of the chain corresponds to 1–69 (MQTMDKQNLL…DPEKQRARRK (69 aa)). A Mitochondrial localization signal motif is present at residues 47 to 50 (HYCH). Zn(2+) is bound at residue Cys-49. A helical membrane pass occupies residues 70 to 90 (LYVASAICLVFMIGEIIGGYL). Residues 91 to 99 (AQSLAIMTD) are Lumenal-facing. The helical transmembrane segment at 100 to 120 (AAHLLTDFASMLISLFALWVS) threads the bilayer. Residues His-102 and Asp-106 each contribute to the Zn(2+) site. Topologically, residues 121–136 (SRPATKTMNFGWHRAE) are cytoplasmic. The helical transmembrane segment at 137-157 (ILGALLSVLSIWVVTGVLVYL) threads the bilayer. Topologically, residues 158–172 (AVQRLISGDYEIKGD) are lumenal. The chain crosses the membrane as a helical span at residues 173–193 (TMLITSGCAVAVNLIMGLALH). Topologically, residues 194-219 (QSGHGHSHGNSRDDSSQQQNPSVRAA) are cytoplasmic. Residues 220–240 (FIHVIGDLLQSVGVLVAAYII) traverse the membrane as a helical segment. Zn(2+)-binding residues include His-222 and Asp-226. Residues 241–248 (YFKPEYKY) lie on the Lumenal side of the membrane. A helical membrane pass occupies residues 249–269 (VDPICTFLFSILVLGTTLTIL). Residues 270–303 (RDVILVLMEGTPKGVDFTTVKNLLLSVDGVEALH) lie on the Cytoplasmic side of the membrane. The short motif at 293–294 (LL) is the Lysosomal targeting motif element. Phosphoserine is present on Ser-295. 3 residues coordinate Zn(2+): His-303, His-320, and Glu-354. A helical transmembrane segment spans residues 304–324 (SLHIWALTVAQPVLSVHIAIA). Residues 325–371 (QNADAQAVLKVARDRLQGKFNFHTMTIQIEKYSEDMKNCQACQGPLE) lie on the Lumenal side of the membrane.

The protein belongs to the cation diffusion facilitator (CDF) transporter (TC 2.A.4) family. SLC30A subfamily. Homodimer. Interacts (via lysosomal targeting motif) with AP3D1; in AP-3-mediated transport to lysosomes. Interacts with TMEM163. Post-translationally, phosphorylated at Ser-295. Phosphorylation at Ser-295 prevents localization to lysosomes. Dephosphorylation of Ser-295 which triggers localization to lysosomes, accumulation of zinc into lysosomes and lysosomal-mediated cell death is induced by TNF-alpha.

The protein localises to the cytoplasmic vesicle. Its subcellular location is the secretory vesicle membrane. The protein resides in the zymogen granule membrane. It is found in the endosome membrane. It localises to the lysosome membrane. The protein localises to the mitochondrion inner membrane. Its subcellular location is the cell membrane. The catalysed reaction is Zn(2+)(in) + 2 H(+)(out) = Zn(2+)(out) + 2 H(+)(in). Functionally, electroneutral proton-coupled antiporter concentrating zinc ions into a variety of intracellular organelles including endosomes, zymogen granules and mitochondria. Thereby, plays a crucial role in cellular zinc homeostasis to confer upon cells protection against its potential cytotoxicity. Regulates the zinc concentration of milk, through the transport of zinc ions into secretory vesicles of mammary cells. By concentrating zinc ions into lysosomes participates to lysosomal-mediated cell death during early mammary gland involution. In terms of biological role, electroneutral proton-coupled antiporter mediating the efflux of zinc ions through the plasma membrane. This Mus musculus (Mouse) protein is Proton-coupled zinc antiporter SLC30A2.